Reading from the N-terminus, the 298-residue chain is H-2 class I histocompatibility antigen, alpha chain (298 aa).

Topologically, residues 1-244 are extracellular; it reads RYEPRARWIE…EPPSSTKTNT (244 aa). The N-linked (GlcNAc...) asparagine glycan is linked to N43. Cysteines 58 and 121 form a disulfide. The N-linked (GlcNAc...) asparagine glycan is linked to N133. One can recognise an Ig-like C1-type domain in the interval 142-230; sequence PKAHVTHHRR…EGLPEPLTLR (89 aa). A disulfide bridge links C160 with C216. Residues 245-265 traverse the membrane as a helical segment; sequence VIIAVPVVLGAVVILGAVMAF. Over 266-298 the chain is Cytoplasmic; sequence VMKRRRNTGGKGGDYALAPVSQSSDMSLPDCKV. The interval 277 to 298 is disordered; sequence GGDYALAPVSQSSDMSLPDCKV. Phosphoserine occurs at positions 289 and 292.

This sequence belongs to the MHC class I family. Heterodimer of an alpha chain and a beta chain (beta-2-microglobulin).

It is found in the membrane. In terms of biological role, involved in the presentation of foreign antigens to the immune system. The protein is H-2 class I histocompatibility antigen, alpha chain (H2-D1) of Mus musculus (Mouse).